Reading from the N-terminus, the 648-residue chain is Threonine--tRNA ligase (648 aa).

Positions 1–61 constitute a TGS domain; that stretch reads MITITFPDGA…EEDGSIEIIT (61 aa). Residues 242–540 form a catalytic region; sequence DHRKLGKELD…LIETYKGAFP (299 aa). 3 residues coordinate Zn(2+): Cys336, His387, and His517.

The protein belongs to the class-II aminoacyl-tRNA synthetase family. Homodimer. The cofactor is Zn(2+).

Its subcellular location is the cytoplasm. It catalyses the reaction tRNA(Thr) + L-threonine + ATP = L-threonyl-tRNA(Thr) + AMP + diphosphate + H(+). Functionally, catalyzes the attachment of threonine to tRNA(Thr) in a two-step reaction: L-threonine is first activated by ATP to form Thr-AMP and then transferred to the acceptor end of tRNA(Thr). Also edits incorrectly charged L-seryl-tRNA(Thr). The sequence is that of Threonine--tRNA ligase from Streptococcus equi subsp. zooepidemicus (strain H70).